Here is a 129-residue protein sequence, read N- to C-terminus: uncharacterized protein (129 aa).

This is an uncharacterized protein from Bacillus subtilis (strain 168).